Reading from the N-terminus, the 145-residue chain is D-aminoacyl-tRNA deacylase (145 aa).

Positions 137-138 (GP) match the Gly-cisPro motif, important for rejection of L-amino acids motif.

It belongs to the DTD family. As to quaternary structure, homodimer.

The protein localises to the cytoplasm. It catalyses the reaction glycyl-tRNA(Ala) + H2O = tRNA(Ala) + glycine + H(+). It carries out the reaction a D-aminoacyl-tRNA + H2O = a tRNA + a D-alpha-amino acid + H(+). Its function is as follows. An aminoacyl-tRNA editing enzyme that deacylates mischarged D-aminoacyl-tRNAs. Also deacylates mischarged glycyl-tRNA(Ala), protecting cells against glycine mischarging by AlaRS. Acts via tRNA-based rather than protein-based catalysis; rejects L-amino acids rather than detecting D-amino acids in the active site. By recycling D-aminoacyl-tRNA to D-amino acids and free tRNA molecules, this enzyme counteracts the toxicity associated with the formation of D-aminoacyl-tRNA entities in vivo and helps enforce protein L-homochirality. This is D-aminoacyl-tRNA deacylase from Pseudomonas aeruginosa (strain UCBPP-PA14).